We begin with the raw amino-acid sequence, 331 residues long: N-arachidonyl glycine receptor (331 aa).

Residues Met-1–Leu-26 are Extracellular-facing. The N-linked (GlcNAc...) asparagine glycan is linked to Asn-14. A helical membrane pass occupies residues Val-27–Phe-47. The Cytoplasmic segment spans residues Ser-48–Thr-56. A helical membrane pass occupies residues Val-57 to Phe-77. The Extracellular portion of the chain corresponds to Arg-78–His-95. A disulfide bridge links Cys-94 with Cys-172. Residues Ile-96–Ser-116 traverse the membrane as a helical segment. At Ala-117–Ala-138 the chain is on the cytoplasmic side. Residues Val-139–Leu-159 form a helical membrane-spanning segment. Residues Asp-160 to Arg-191 are Extracellular-facing. The N-linked (GlcNAc...) asparagine glycan is linked to Asn-188. Residues Leu-192–His-212 form a helical membrane-spanning segment. The Cytoplasmic portion of the chain corresponds to Ser-213–Thr-236. The helical transmembrane segment at Leu-237 to Leu-257 threads the bilayer. Residues Gln-258–Gly-268 are Extracellular-facing. The chain crosses the membrane as a helical span at residues Ala-269–Val-289. The Cytoplasmic portion of the chain corresponds to Ser-290 to Leu-331. A Phosphoserine modification is found at Ser-322.

It belongs to the G-protein coupled receptor 1 family. Expressed in testis, spleen and brain (at protein level).

It localises to the cell membrane. The protein resides in the cytoplasmic vesicle membrane. In terms of biological role, g protein-coupled receptor (GPCR) that plays a role in diverse physiological processes particularly within the immune and nervous systems. Becomes active when triggered by various endogenous ligands including endocannabinoid N-arachidonyl glycine (NAGly), delta-9-tetrahydrocannabinol or resolvin D2/RvD2 derived from the omega-3 fatty acid docosahexaenoic acid (DHA). Upon RvD2 binding, facilitates the resolution of inflammation, aiding in tissue repair and homeostasis. Mechanistically, RvD2 ligation initiates Galphas protein coupling, activation of cAMP-PKA signaling pathway and phosphorylation of STAT3, leading to RvD2-stimulated macrophage phagocytosis. Mediates NAGly-induced process of reorganization of actin filaments and induction of acrosomal exocytosis. Activation by N-arachidonoyl glycine (NAGly) can also induce apoptosis in macrophages. Plays a role in homeostasis of CD8+ subsets of intraepithelial lymphocytes (IELs) (CD8alphaalpha and CD8alphabeta IELs) in small intestine by supporting preferential migration of CD8alphaalpha T-cells to intraepithelial compartment over lamina propria compartment, and by mediating their reconstitution into small intestine after bone marrow transplant. Participates also in hypotensive responses, mediating reduction in intraocular and blood pressure. This Rattus norvegicus (Rat) protein is N-arachidonyl glycine receptor.